We begin with the raw amino-acid sequence, 273 residues long: Ribosomal RNA small subunit methyltransferase I (273 aa).

The protein belongs to the methyltransferase superfamily. RsmI family.

Its subcellular location is the cytoplasm. The enzyme catalyses cytidine(1402) in 16S rRNA + S-adenosyl-L-methionine = 2'-O-methylcytidine(1402) in 16S rRNA + S-adenosyl-L-homocysteine + H(+). Functionally, catalyzes the 2'-O-methylation of the ribose of cytidine 1402 (C1402) in 16S rRNA. The polypeptide is Ribosomal RNA small subunit methyltransferase I (Xylella fastidiosa (strain 9a5c)).